Reading from the N-terminus, the 567-residue chain is Oxygen-dependent choline dehydrogenase (567 aa).

An FAD-binding site is contributed by 4-33 (DYIIIGAGSAGNVLAARLTEDADVTVLLLE). H473 (proton acceptor) is an active-site residue.

It belongs to the GMC oxidoreductase family. Requires FAD as cofactor.

It carries out the reaction choline + A = betaine aldehyde + AH2. The catalysed reaction is betaine aldehyde + NAD(+) + H2O = glycine betaine + NADH + 2 H(+). Its pathway is amine and polyamine biosynthesis; betaine biosynthesis via choline pathway; betaine aldehyde from choline (cytochrome c reductase route): step 1/1. Involved in the biosynthesis of the osmoprotectant glycine betaine. Catalyzes the oxidation of choline to betaine aldehyde and betaine aldehyde to glycine betaine at the same rate. This is Oxygen-dependent choline dehydrogenase from Yersinia pestis (strain Pestoides F).